A 432-amino-acid polypeptide reads, in one-letter code: Histidine--tRNA ligase (432 aa).

The protein belongs to the class-II aminoacyl-tRNA synthetase family. As to quaternary structure, homodimer.

Its subcellular location is the cytoplasm. It catalyses the reaction tRNA(His) + L-histidine + ATP = L-histidyl-tRNA(His) + AMP + diphosphate + H(+). The sequence is that of Histidine--tRNA ligase from Ralstonia nicotianae (strain ATCC BAA-1114 / GMI1000) (Ralstonia solanacearum).